Consider the following 438-residue polypeptide: Aspartyl protease 25 (438 aa).

The first 23 residues, 1-23 (MAATTTIPLLLLLLAATVAAAAA), serve as a signal peptide directing secretion. Positions 79–433 (YVVRAGLGSP…DVANSRVGFA (355 aa)) constitute a Peptidase A1 domain. Asp97 is a catalytic residue. Cys107 and Cys113 are oxidised to a cystine. N-linked (GlcNAc...) asparagine glycosylation is found at Asn123, Asn193, and Asn282. Residue Asp313 is part of the active site. Cys352 and Cys394 form a disulfide bridge.

The protein belongs to the peptidase A1 family.

In terms of biological role, anther-specific aspartic protease involved in tapetal programmed cell death (PCD). Directly regulated by the transcription factor EAT1/DTD in anthers during tapetum PCD and degeneration. The protein is Aspartyl protease 25 of Oryza sativa subsp. japonica (Rice).